We begin with the raw amino-acid sequence, 152 residues long: Endoribonuclease YbeY (152 aa).

The Zn(2+) site is built by His116, His120, and His126.

This sequence belongs to the endoribonuclease YbeY family. It depends on Zn(2+) as a cofactor.

It localises to the cytoplasm. In terms of biological role, single strand-specific metallo-endoribonuclease involved in late-stage 70S ribosome quality control and in maturation of the 3' terminus of the 16S rRNA. This is Endoribonuclease YbeY from Mycoplasma mobile (strain ATCC 43663 / 163K / NCTC 11711) (Mesomycoplasma mobile).